Here is a 37-residue protein sequence, read N- to C-terminus: MGSLKDAEKEGLNVCSDLSGHVSIARYIEEEYEVLIF.

This is an uncharacterized protein from Archaeoglobus fulgidus (strain ATCC 49558 / DSM 4304 / JCM 9628 / NBRC 100126 / VC-16).